Consider the following 1213-residue polypeptide: Hybrid signal transduction histidine kinase K (1213 aa).

Disordered regions lie at residues Met1–Asn37, Asn98–Ser189, Asn279–Arg392, and Thr495–Asn565. Composition is skewed to low complexity over residues Asn98–Gln162, Ser171–Ser189, Asn279–Ala331, Asn339–Asn371, Gln498–Gln511, and Gln522–Asn565. 6 helical membrane-spanning segments follow: residues Ile600–Ile618, Leu628–Trp648, Ile652–Ile672, Thr676–Ile696, Ile729–Gly749, and Ile768–Ile788. The Histidine kinase domain maps to Thr822–Glu1052. The residue at position 825 (His825) is a Phosphohistidine; by autocatalysis. A Response regulatory domain is found at Lys1076 to Ile1199. The residue at position 1125 (Asp1125) is a 4-aspartylphosphate.

In terms of processing, activation probably requires transfer of a phosphate group between a histidine in the kinase core (transmitter) domain and an aspartate of the receiver domain.

It is found in the nucleus membrane. It carries out the reaction ATP + protein L-histidine = ADP + protein N-phospho-L-histidine.. Involved in a signal transduction pathway that regulates morphogenesis and controls entry into the culmination stage. May act via the regA pathway, being activated by a morphogenesis-stimulated ligand, reducing phosphodiesterase regA levels and allowing cAMP level to rise to promote the culmination stage. This protein probably undergoes an ATP-dependent autophosphorylation at a conserved histidine residue in the kinase core, and a phosphoryl group is then transferred to a conserved aspartate residue in the receiver domain. This is Hybrid signal transduction histidine kinase K (dhkK) from Dictyostelium discoideum (Social amoeba).